A 130-amino-acid polypeptide reads, in one-letter code: Small ribosomal subunit protein uS11c (130 aa).

It belongs to the universal ribosomal protein uS11 family. Part of the 30S ribosomal subunit.

The protein resides in the plastid. It is found in the cyanelle. In Cyanophora paradoxa, this protein is Small ribosomal subunit protein uS11c.